The following is a 258-amino-acid chain: Indole-3-glycerol phosphate synthase (258 aa).

The protein belongs to the TrpC family.

It catalyses the reaction 1-(2-carboxyphenylamino)-1-deoxy-D-ribulose 5-phosphate + H(+) = (1S,2R)-1-C-(indol-3-yl)glycerol 3-phosphate + CO2 + H2O. It functions in the pathway amino-acid biosynthesis; L-tryptophan biosynthesis; L-tryptophan from chorismate: step 4/5. This Nautilia profundicola (strain ATCC BAA-1463 / DSM 18972 / AmH) protein is Indole-3-glycerol phosphate synthase.